A 76-amino-acid polypeptide reads, in one-letter code: Putative defensin-like protein 121 (76 aa).

The N-terminal stretch at 1–26 (MTYKATILAIFMIILVLGIGTKETRG) is a signal peptide. 4 cysteine pairs are disulfide-bonded: C30-C74, C39-C59, C44-C68, and C48-C70.

It belongs to the DEFL family.

Its subcellular location is the secreted. The sequence is that of Putative defensin-like protein 121 (LCR55) from Arabidopsis thaliana (Mouse-ear cress).